Here is a 221-residue protein sequence, read N- to C-terminus: Redox-sensing transcriptional repressor Rex (221 aa).

The segment at residues 17 to 56 is a DNA-binding region (H-T-H motif); the sequence is IYYYYLSSLHEAGIKRINSTEISEAIKFDAATVRRDFSYF. 91 to 96 contributes to the NAD(+) binding site; the sequence is GTGNLG.

Belongs to the transcriptional regulatory Rex family. In terms of assembly, homodimer.

The protein localises to the cytoplasm. Its function is as follows. Modulates transcription in response to changes in cellular NADH/NAD(+) redox state. The sequence is that of Redox-sensing transcriptional repressor Rex from Oenococcus oeni (strain ATCC BAA-331 / PSU-1).